Here is a 566-residue protein sequence, read N- to C-terminus: Mucolipin-2 (566 aa).

At 1–65 the chain is on the cytoplasmic side; that stretch reads MARQPYRFPQ…YRARRQIPWK (65 aa). Residues 66-86 form a helical membrane-spanning segment; sequence LGLQILKIVMVTTQLVRFGLS. Residues 87–288 are Extracellular-facing; it reads NQLVVAFKED…IFGSTQKNAQ (202 aa). Residues 107–123 are extracellular/lumenal pore loop; that stretch reads KGYSGTDEDDYSCSVYT. Intrachain disulfides connect C164–C190 and C243–C274. A helical membrane pass occupies residues 289-309; sequence YVLVFDAFVIVICLASLILCT. Residues 310–346 are Cytoplasmic-facing; sequence RSIVLALRLRKRFLNFFLEKYKRPVCDTDQWEFINGW. Residues 347 to 367 form a helical membrane-spanning segment; the sequence is YVLVIISDLMTIIGSILKMEI. The Extracellular portion of the chain corresponds to 368–376; that stretch reads KAKNLTNYD. Residues 377 to 397 form a helical membrane-spanning segment; the sequence is LCSIFLGTSTLLVWVGVIRYL. The Cytoplasmic portion of the chain corresponds to 398 to 419; the sequence is GYFQAYNVLILTMQASLPKVLR. Residues 420 to 440 traverse the membrane as a helical segment; the sequence is FCACAGMIYLGYTFCGWIVLG. At 441–448 the chain is on the extracellular side; the sequence is PYHDKFEN. Residues 449–469 constitute an intramembrane region (pore-forming); the sequence is LNTVAECLFSLVNGDDMFATF. The Selectivity filter signature appears at 461 to 464; that stretch reads NGDD. The Extracellular portion of the chain corresponds to 470 to 480; sequence AQIQQKSILVW. Residues 481-502 form a helical membrane-spanning segment; sequence LFSRLYLYSFISLFIYMILSLF. Topologically, residues 503 to 566 are cytoplasmic; sequence IALITDSYDT…RSDDHLIPIS (64 aa).

This sequence belongs to the transient receptor (TC 1.A.4) family. Polycystin subfamily. MCOLN2 sub-subfamily. As to quaternary structure, forms homooligomeric complexes; probably tetrameric. Can heterooligomerize with MCOLN1; heteromeric assemblies have different channel properties as compared to the respective homooligomers and may be tissue-specific. Interacts with TMEM176A.

The protein resides in the cell membrane. Its subcellular location is the late endosome membrane. The protein localises to the lysosome membrane. It localises to the recycling endosome membrane. It carries out the reaction Ca(2+)(in) = Ca(2+)(out). The enzyme catalyses Fe(2+)(in) = Fe(2+)(out). Its activity is regulated as follows. Channel activity is reduced by low extracellular/lumenal pH level. Functionally, nonselective cation channel probably playing a role in the regulation of membrane trafficking events. Acts as a Ca(2+)-permeable cation channel with inwardly rectifying activity. May activate ARF6 and be involved in the trafficking of GPI-anchored cargo proteins to the cell surface via the ARF6-regulated recycling pathway. May play a role in immune processes. In adaptive immunity, TRPML2 and TRPML1 may play redundant roles in the function of the specialized lysosomes of B cells. In the innate immune response, may play a role in the regulation of chemokine secretion and macrophage migration. Through a possible and probably tissue-specific heteromerization with MCOLN1 may be at least in part involved in many lysosome-dependent cellular events. Also functions as a Fe(2+) permeable channel. The sequence is that of Mucolipin-2 from Homo sapiens (Human).